Consider the following 479-residue polypeptide: Ribosomal RNA small subunit methyltransferase F (479 aa).

Residues 125–131, glutamate 149, aspartate 176, and aspartate 194 each bind S-adenosyl-L-methionine; that span reads AAAPGSK. Cysteine 247 functions as the Nucleophile in the catalytic mechanism.

This sequence belongs to the class I-like SAM-binding methyltransferase superfamily. RsmB/NOP family.

Its subcellular location is the cytoplasm. It catalyses the reaction cytidine(1407) in 16S rRNA + S-adenosyl-L-methionine = 5-methylcytidine(1407) in 16S rRNA + S-adenosyl-L-homocysteine + H(+). In terms of biological role, specifically methylates the cytosine at position 1407 (m5C1407) of 16S rRNA. The polypeptide is Ribosomal RNA small subunit methyltransferase F (Salmonella newport (strain SL254)).